The chain runs to 762 residues: Cell surface protein (762 aa).

A signal peptide spans 1-26 (MKNLKKLIAVVSTFALVFSAMAVGFA). SLH domains are found at residues 27–90 (ATTP…EMAK), 92–155 (EKSA…WPYG), and 156–204 (YLAK…KEVL). Tyrosine 297, tyrosine 516, tyrosine 520, and tyrosine 632 each carry an O-linked (Glc...) tyrosine glycan.

In terms of processing, glycosylated; contains 8% carbohydrates, which correspond to about 40 to 50 sugar molecules per monomer. O-linked glycans consist of Glc, GalNAc and GlcNAc.

The protein resides in the secreted. It localises to the cell wall. The protein localises to the S-layer. In terms of biological role, the S-layer is a paracrystalline mono-layered assembly of proteins which coat the surface of bacteria. The sequence is that of Cell surface protein from Thermoanaerobacter kivui (Acetogenium kivui).